A 207-amino-acid polypeptide reads, in one-letter code: ATP-dependent Clp protease proteolytic subunit (207 aa).

Catalysis depends on serine 111, which acts as the Nucleophile. Residue histidine 136 is part of the active site.

Belongs to the peptidase S14 family. In terms of assembly, fourteen ClpP subunits assemble into 2 heptameric rings which stack back to back to give a disk-like structure with a central cavity, resembling the structure of eukaryotic proteasomes.

The protein localises to the cytoplasm. It catalyses the reaction Hydrolysis of proteins to small peptides in the presence of ATP and magnesium. alpha-casein is the usual test substrate. In the absence of ATP, only oligopeptides shorter than five residues are hydrolyzed (such as succinyl-Leu-Tyr-|-NHMec, and Leu-Tyr-Leu-|-Tyr-Trp, in which cleavage of the -Tyr-|-Leu- and -Tyr-|-Trp bonds also occurs).. Functionally, cleaves peptides in various proteins in a process that requires ATP hydrolysis. Has a chymotrypsin-like activity. Plays a major role in the degradation of misfolded proteins. This chain is ATP-dependent Clp protease proteolytic subunit, found in Yersinia enterocolitica serotype O:8 / biotype 1B (strain NCTC 13174 / 8081).